An 87-amino-acid polypeptide reads, in one-letter code: Small ribosomal subunit protein bS18 (87 aa).

Belongs to the bacterial ribosomal protein bS18 family. In terms of assembly, part of the 30S ribosomal subunit. Forms a tight heterodimer with protein bS6.

Its function is as follows. Binds as a heterodimer with protein bS6 to the central domain of the 16S rRNA, where it helps stabilize the platform of the 30S subunit. The protein is Small ribosomal subunit protein bS18 of Nitratidesulfovibrio vulgaris (strain ATCC 29579 / DSM 644 / CCUG 34227 / NCIMB 8303 / VKM B-1760 / Hildenborough) (Desulfovibrio vulgaris).